Reading from the N-terminus, the 518-residue chain is Probable bifunctional methylthioribulose-1-phosphate dehydratase/enolase-phosphatase E1 (518 aa).

Positions 1 to 242 (MACCGGGRGE…AIKLYQLGID (242 aa)) are methylthioribulose-1-phosphate dehydratase. Substrate is bound at residue C114. 2 residues coordinate Zn(2+): H132 and H134. The active-site Proton donor/acceptor; for methylthioribulose-1-phosphate dehydratase activity is the E157. H207 is a Zn(2+) binding site. Positions 279–518 (VVLDIEGTTT…FRTIKSFSEI (240 aa)) are enolase-phosphatase E1. Mg(2+)-binding residues include D282 and E284. Substrate contacts are provided by residues 417-418 (SS) and K451. D477 contributes to the Mg(2+) binding site.

It in the N-terminal section; belongs to the aldolase class II family. MtnB subfamily. The protein in the C-terminal section; belongs to the HAD-like hydrolase superfamily. MasA/MtnC family. Requires Zn(2+) as cofactor. Mg(2+) is required as a cofactor.

The enzyme catalyses 5-(methylsulfanyl)-D-ribulose 1-phosphate = 5-methylsulfanyl-2,3-dioxopentyl phosphate + H2O. The catalysed reaction is 5-methylsulfanyl-2,3-dioxopentyl phosphate + H2O = 1,2-dihydroxy-5-(methylsulfanyl)pent-1-en-3-one + phosphate. It participates in amino-acid biosynthesis; L-methionine biosynthesis via salvage pathway; L-methionine from S-methyl-5-thio-alpha-D-ribose 1-phosphate: step 2/6. It functions in the pathway amino-acid biosynthesis; L-methionine biosynthesis via salvage pathway; L-methionine from S-methyl-5-thio-alpha-D-ribose 1-phosphate: step 3/6. Its pathway is amino-acid biosynthesis; L-methionine biosynthesis via salvage pathway; L-methionine from S-methyl-5-thio-alpha-D-ribose 1-phosphate: step 4/6. This Oryza sativa subsp. indica (Rice) protein is Probable bifunctional methylthioribulose-1-phosphate dehydratase/enolase-phosphatase E1.